We begin with the raw amino-acid sequence, 152 residues long: Perlwapin (152 aa).

Residues 1 to 18 (LILCVVVCTAAVLGTAAG) form the signal peptide. A WAP 1 domain is found at 19 to 61 (YESQLPGCPPGAYPAICARYCYSDRDCASGYYCCNTGCLNICV). 12 cysteine pairs are disulfide-bonded: C26/C52, C35/C56, C39/C51, C45/C60, C69/C95, C77/C100, C82/C94, C88/C103, C112/C139, C122/C142, C126/C138, and C132/C146. A WAP 2; atypical domain is found at 62 to 107 (PKPKPGLCPSITQSPCRGNVCNNDQDCPGNRKCCGKPGCKRCYRPK). The region spanning 108-150 (KPGSCPARKYEAGPCVVYCDGDFDCPGDKKCCGGCPRLCEKPC) is the WAP 3 domain.

Component of the acid-soluble and acid-insoluble organic matrix of prismatic shell layers (at protein level).

It is found in the secreted. In terms of biological role, inhibits growth of calcium carbonate crystals. May inhibit growth of certain crystallographic planes in the mineral phase of nacre in the shell. The polypeptide is Perlwapin (Haliotis asinina (Donkey's ear abalone)).